The sequence spans 556 residues: Glucose-6-phosphate isomerase (556 aa).

The active-site Proton donor is the E360. Catalysis depends on residues H391 and K519.

This sequence belongs to the GPI family.

Its subcellular location is the cytoplasm. The enzyme catalyses alpha-D-glucose 6-phosphate = beta-D-fructose 6-phosphate. Its pathway is carbohydrate biosynthesis; gluconeogenesis. It participates in carbohydrate degradation; glycolysis; D-glyceraldehyde 3-phosphate and glycerone phosphate from D-glucose: step 2/4. Functionally, catalyzes the reversible isomerization of glucose-6-phosphate to fructose-6-phosphate. The protein is Glucose-6-phosphate isomerase of Acinetobacter baumannii (strain SDF).